We begin with the raw amino-acid sequence, 802 residues long: Bifunctional purine biosynthetic protein ADE5,7 (802 aa).

A GARS region spans residues 1–444 (MPEITAFPQP…FRRDIAYRAL (444 aa)). One can recognise an ATP-grasp domain in the interval 126–339 (KEFMARHNIP…LAEVLLACVE (214 aa)). 157–218 (KPFTSGRSVI…EEYLSGPEIS (62 aa)) contributes to the ATP binding site. Mg(2+) is bound by residues glutamate 307 and asparagine 309. Positions 455–788 (LTYAAAGVSV…EAWVIGEVQE (334 aa)) are AIRS.

It in the N-terminal section; belongs to the GARS family. In the C-terminal section; belongs to the AIR synthase family. Homodimer. It depends on Mg(2+) as a cofactor. Mn(2+) serves as cofactor.

Its subcellular location is the cytoplasm. It localises to the cytosol. The catalysed reaction is 2-formamido-N(1)-(5-O-phospho-beta-D-ribosyl)acetamidine + ATP = 5-amino-1-(5-phospho-beta-D-ribosyl)imidazole + ADP + phosphate + H(+). It catalyses the reaction 5-phospho-beta-D-ribosylamine + glycine + ATP = N(1)-(5-phospho-beta-D-ribosyl)glycinamide + ADP + phosphate + H(+). The protein operates within purine metabolism; IMP biosynthesis via de novo pathway; 5-amino-1-(5-phospho-D-ribosyl)imidazole from N(2)-formyl-N(1)-(5-phospho-D-ribosyl)glycinamide: step 2/2. It functions in the pathway purine metabolism; IMP biosynthesis via de novo pathway; N(1)-(5-phospho-D-ribosyl)glycinamide from 5-phospho-alpha-D-ribose 1-diphosphate: step 2/2. Its function is as follows. Catalyzes the second and fifth step in the 'de novo' purine biosynthesis pathway; contains phosphoribosylamine--glycine ligase (GARS) and phosphoribosylformylglycinamidine cyclo-ligase (AIRS) activities. The polypeptide is Bifunctional purine biosynthetic protein ADE5,7 (Cryptococcus neoformans var. grubii serotype A (strain H99 / ATCC 208821 / CBS 10515 / FGSC 9487) (Filobasidiella neoformans var. grubii)).